We begin with the raw amino-acid sequence, 134 residues long: Thyrotropin subunit beta (134 aa).

A signal peptide spans 1–16 (MSPFFMMSLLFGLTFG). Intrachain disulfides connect Cys-22–Cys-72, Cys-36–Cys-87, Cys-39–Cys-125, Cys-47–Cys-103, Cys-51–Cys-105, and Cys-108–Cys-115. Asn-43 carries N-linked (GlcNAc...) asparagine glycosylation.

Belongs to the glycoprotein hormones subunit beta family. Heterodimer of a common alpha chain and a unique beta chain which confers biological specificity to thyrotropin, lutropin, follitropin and gonadotropin.

The protein localises to the secreted. Indispensable for the control of thyroid structure and metabolism. This is Thyrotropin subunit beta (TSHB) from Gallus gallus (Chicken).